A 162-amino-acid polypeptide reads, in one-letter code: uncharacterized protein (162 aa).

The N-terminal stretch at 1 to 23 (MLSLKSPAVLLSMVILVPLFALA) is a signal peptide.

This is an uncharacterized protein from Mycosarcoma maydis (Corn smut fungus).